The primary structure comprises 338 residues: Histidinol-phosphate aminotransferase (338 aa).

Lys-204 is subject to N6-(pyridoxal phosphate)lysine.

It belongs to the class-II pyridoxal-phosphate-dependent aminotransferase family. Histidinol-phosphate aminotransferase subfamily. Requires pyridoxal 5'-phosphate as cofactor.

The catalysed reaction is L-histidinol phosphate + 2-oxoglutarate = 3-(imidazol-4-yl)-2-oxopropyl phosphate + L-glutamate. Its pathway is amino-acid biosynthesis; L-histidine biosynthesis; L-histidine from 5-phospho-alpha-D-ribose 1-diphosphate: step 7/9. This chain is Histidinol-phosphate aminotransferase, found in Pyrococcus furiosus (strain ATCC 43587 / DSM 3638 / JCM 8422 / Vc1).